The primary structure comprises 37 residues: Potassium channel toxin alpha-KTx 15.1 (37 aa).

The residue at position 1 (Gln1) is a Pyrrolidone carboxylic acid. Intrachain disulfides connect Cys8-Cys28, Cys13-Cys33, and Cys17-Cys35.

The protein belongs to the short scorpion toxin superfamily. Potassium channel inhibitor family. Alpha-KTx 15 subfamily. As to expression, expressed by the venom gland.

Its subcellular location is the secreted. Functionally, blocker of voltage-gated potassium channels (600 nM of the toxin induces a block of 25% of hERG currents). May also inhibit Kv4/KCND when coexpressed with DPP6 or DPP10. In adult rat brain, it blocks the transient potassium channels in cerebellum granular cells. Blocks potassium channels by a simple 'plugging mechanism', in which a single toxin molecule finds a specific receptor site in the external vestibule of the potassium channel and thereby occludes the outer entry to the potassium conducting pore. The polypeptide is Potassium channel toxin alpha-KTx 15.1 (Androctonus australis (Sahara scorpion)).